We begin with the raw amino-acid sequence, 369 residues long: Iron-sulfur cluster assembly SufBD family protein AF_2365 (369 aa).

It belongs to the iron-sulfur cluster assembly SufBD family.

The sequence is that of Iron-sulfur cluster assembly SufBD family protein AF_2365 from Archaeoglobus fulgidus (strain ATCC 49558 / DSM 4304 / JCM 9628 / NBRC 100126 / VC-16).